The primary structure comprises 258 residues: MKIAILYREEREKEGKFLKEKISKEHEVIEFGKANAPGRVTADLIVVVGGDGTVLKAAKKAADGTPMVGFKAGRLGFLTSYTLDEIDRFLEDLRNWNFREETRWFIQIESELGNHLALNDVTLERDLSGKMVEIEVEVEHHSSMWFFADGVVISTPTGSTAYSLSIGGPIIFPECEVLEISPIAPQFFLTRSVVIPSNFKVVVESQRDINMLVDGVLTGKTKRIEVKKSRRYVRILRPPEYDYVTVIRDKLGYGRRIE.

Catalysis depends on aspartate 51, which acts as the Proton acceptor. Residues 51-52 (DG), lysine 56, 119-120 (ND), lysine 130, aspartate 149, 160-165 (TAYSLS), and alanine 184 contribute to the NAD(+) site.

The protein belongs to the NAD kinase family. The cofactor is a divalent metal cation.

It is found in the cytoplasm. The catalysed reaction is NAD(+) + ATP = ADP + NADP(+) + H(+). Involved in the regulation of the intracellular balance of NAD and NADP, and is a key enzyme in the biosynthesis of NADP. Catalyzes specifically the phosphorylation on 2'-hydroxyl of the adenosine moiety of NAD to yield NADP. This Thermotoga sp. (strain RQ2) protein is NAD kinase.